A 192-amino-acid polypeptide reads, in one-letter code: Cytidylate kinase (192 aa).

7 to 15 (GPPGSGKST) is an ATP binding site.

The protein belongs to the cytidylate kinase family. Type 2 subfamily.

It localises to the cytoplasm. The catalysed reaction is CMP + ATP = CDP + ADP. It catalyses the reaction dCMP + ATP = dCDP + ADP. The chain is Cytidylate kinase from Halorubrum lacusprofundi (strain ATCC 49239 / DSM 5036 / JCM 8891 / ACAM 34).